Here is a 417-residue protein sequence, read N- to C-terminus: Serine hydroxymethyltransferase (417 aa).

(6S)-5,6,7,8-tetrahydrofolate is bound by residues L121 and 125–127; that span reads GHL. K229 carries the post-translational modification N6-(pyridoxal phosphate)lysine. 355–357 contacts (6S)-5,6,7,8-tetrahydrofolate; the sequence is SPF.

It belongs to the SHMT family. In terms of assembly, homodimer. Pyridoxal 5'-phosphate is required as a cofactor.

The protein localises to the cytoplasm. It carries out the reaction (6R)-5,10-methylene-5,6,7,8-tetrahydrofolate + glycine + H2O = (6S)-5,6,7,8-tetrahydrofolate + L-serine. It functions in the pathway one-carbon metabolism; tetrahydrofolate interconversion. Its pathway is amino-acid biosynthesis; glycine biosynthesis; glycine from L-serine: step 1/1. Catalyzes the reversible interconversion of serine and glycine with tetrahydrofolate (THF) serving as the one-carbon carrier. This reaction serves as the major source of one-carbon groups required for the biosynthesis of purines, thymidylate, methionine, and other important biomolecules. Also exhibits THF-independent aldolase activity toward beta-hydroxyamino acids, producing glycine and aldehydes, via a retro-aldol mechanism. This is Serine hydroxymethyltransferase from Aeromonas hydrophila subsp. hydrophila (strain ATCC 7966 / DSM 30187 / BCRC 13018 / CCUG 14551 / JCM 1027 / KCTC 2358 / NCIMB 9240 / NCTC 8049).